The chain runs to 263 residues: 4-hydroxy-2-oxo-heptane-1,7-dioate aldolase (263 aa).

Histidine 45 functions as the Proton acceptor in the catalytic mechanism. Position 147 (glutamine 147) interacts with substrate. Glutamate 149 is an a divalent metal cation binding site. The substrate site is built by alanine 174 and aspartate 175. Residue aspartate 175 coordinates a divalent metal cation.

This sequence belongs to the HpcH/HpaI aldolase family. As to quaternary structure, homohexamer; trimer of dimers. It depends on a divalent metal cation as a cofactor.

The catalysed reaction is 4-hydroxy-2-oxoheptanedioate = succinate semialdehyde + pyruvate. It functions in the pathway aromatic compound metabolism; 4-hydroxyphenylacetate degradation; pyruvate and succinate semialdehyde from 4-hydroxyphenylacetate: step 7/7. Catalyzes the reversible retro-aldol cleavage of 4-hydroxy-2-ketoheptane-1,7-dioate (HKHD) to pyruvate and succinic semialdehyde. In Salmonella heidelberg (strain SL476), this protein is 4-hydroxy-2-oxo-heptane-1,7-dioate aldolase.